A 2368-amino-acid chain; its full sequence is Highly reducing polyketide synthase cla2 (2368 aa).

The region spanning 10 to 434 (QIPIAIVGLG…GTNGLVVLEA (425 aa)) is the Ketosynthase family 3 (KS3) domain. Active-site for beta-ketoacyl synthase activity residues include C182, H317, and H357. The tract at residues 548–877 (FVFTGQGAQW…RGQNALDTSL (330 aa)) is malonyl-CoA:ACP transacylase (MAT) domain. The For malonyltransferase activity role is filled by S638. The segment at 936 to 1071 (HSMIGLKQPM…GLVAIEYTNK (136 aa)) is N-terminal hotdog fold. Positions 936–1175 (HSMIGLKQPM…AIFQSIFGST (240 aa)) are dehydratase (DH) domain. A PKS/mFAS DH domain is found at 936–1255 (HSMIGLKQPM…MTEPEVGDDA (320 aa)). Residue H968 is the Proton acceptor; for dehydratase activity of the active site. The tract at residues 1099–1255 (PLMIRREKFY…MTEPEVGDDA (157 aa)) is C-terminal hotdog fold. D1165 serves as the catalytic Proton donor; for dehydratase activity. The enoylreductase (ER) domain stretch occupies residues 1655–1967 (GFLDSLQFIK…QGKHRGKLVL (313 aa)). The segment at 1991–2170 (ATYLIIGGLG…AVAVNLTIIR (180 aa)) is catalytic ketoreductase (KRc) domain. The 78-residue stretch at 2283-2360 (QASEIITEGL…VLAKTIASRS (78 aa)) folds into the Carrier domain. S2320 bears the O-(pantetheine 4'-phosphoryl)serine mark.

It functions in the pathway secondary metabolite biosynthesis. Functionally, highly reducing polyketide synthase; part of the gene cluster that mediates the biosynthesis of cladosporin, a tricyclic octaketide that acts as an antimalarial agent though inhibition of the Plasmodium falciparum lysyl-tRNA synthetase. The highly reducing polyketide synthase cla2 is responsible for biosynthesis up to the pentaketide stage, including of the tetrahydropyran (THP) ring, whereas the three subsequent ketide extensions with no reduction are catalyzed by the non-reducing polyketide synthase cla3. The polypeptide is Highly reducing polyketide synthase cla2 (Cladosporium cladosporioides).